The chain runs to 503 residues: Alpha-1B-glycoprotein (503 aa).

Positions 1 to 21 are cleaved as a signal peptide; the sequence is MSAWAALLLLWGLSLSPVTEQ. Ig-like V-type domains are found at residues 27 to 115, 117 to 204, 208 to 305, 307 to 405, and 406 to 501; these read PRPS…EVTG, EPLP…TVTI, DPPP…LVLS, GTLP…LRVD, and GPLP…LRVA. An intrachain disulfide couples Cys49 to Cys96. 2 N-linked (GlcNAc...) asparagine glycosylation sites follow: Asn137 and Asn182. Cystine bridges form between Cys142–Cys185, Cys235–Cys282, Cys333–Cys382, and Cys431–Cys478. Asn379 carries an N-linked (GlcNAc...) asparagine glycan.

In terms of assembly, interacts with CRISP3. In terms of tissue distribution, plasma.

It localises to the secreted. This chain is Alpha-1B-glycoprotein, found in Bos taurus (Bovine).